The primary structure comprises 427 residues: Serine--tRNA ligase (427 aa).

231-233 is a binding site for L-serine; the sequence is TAE. ATP is bound at residue 262-264; that stretch reads RSE. Position 285 (Glu285) interacts with L-serine. 349–352 provides a ligand contact to ATP; the sequence is EISS. Ser385 serves as a coordination point for L-serine.

Belongs to the class-II aminoacyl-tRNA synthetase family. Type-1 seryl-tRNA synthetase subfamily. As to quaternary structure, homodimer. The tRNA molecule binds across the dimer.

The protein localises to the cytoplasm. It carries out the reaction tRNA(Ser) + L-serine + ATP = L-seryl-tRNA(Ser) + AMP + diphosphate + H(+). It catalyses the reaction tRNA(Sec) + L-serine + ATP = L-seryl-tRNA(Sec) + AMP + diphosphate + H(+). The protein operates within aminoacyl-tRNA biosynthesis; selenocysteinyl-tRNA(Sec) biosynthesis; L-seryl-tRNA(Sec) from L-serine and tRNA(Sec): step 1/1. In terms of biological role, catalyzes the attachment of serine to tRNA(Ser). Is also able to aminoacylate tRNA(Sec) with serine, to form the misacylated tRNA L-seryl-tRNA(Sec), which will be further converted into selenocysteinyl-tRNA(Sec). This chain is Serine--tRNA ligase, found in Rhizobium etli (strain ATCC 51251 / DSM 11541 / JCM 21823 / NBRC 15573 / CFN 42).